The following is a 482-amino-acid chain: 2-succinylbenzoate--CoA ligase (482 aa).

This sequence belongs to the ATP-dependent AMP-binding enzyme family. MenE subfamily.

The catalysed reaction is 2-succinylbenzoate + ATP + CoA = 2-succinylbenzoyl-CoA + AMP + diphosphate. It participates in quinol/quinone metabolism; 1,4-dihydroxy-2-naphthoate biosynthesis; 1,4-dihydroxy-2-naphthoate from chorismate: step 5/7. The protein operates within quinol/quinone metabolism; menaquinone biosynthesis. Converts 2-succinylbenzoate (OSB) to 2-succinylbenzoyl-CoA (OSB-CoA). This is 2-succinylbenzoate--CoA ligase from Bacillus cereus (strain ATCC 14579 / DSM 31 / CCUG 7414 / JCM 2152 / NBRC 15305 / NCIMB 9373 / NCTC 2599 / NRRL B-3711).